Reading from the N-terminus, the 72-residue chain is Translation initiation factor IF-1 (72 aa).

The S1-like domain occupies 1-72 (MAKEEVLEFP…TKGRITYRFK (72 aa)).

This sequence belongs to the IF-1 family. Component of the 30S ribosomal translation pre-initiation complex which assembles on the 30S ribosome in the order IF-2 and IF-3, IF-1 and N-formylmethionyl-tRNA(fMet); mRNA recruitment can occur at any time during PIC assembly.

It is found in the cytoplasm. Functionally, one of the essential components for the initiation of protein synthesis. Stabilizes the binding of IF-2 and IF-3 on the 30S subunit to which N-formylmethionyl-tRNA(fMet) subsequently binds. Helps modulate mRNA selection, yielding the 30S pre-initiation complex (PIC). Upon addition of the 50S ribosomal subunit IF-1, IF-2 and IF-3 are released leaving the mature 70S translation initiation complex. The chain is Translation initiation factor IF-1 from Sinorhizobium medicae (strain WSM419) (Ensifer medicae).